The sequence spans 688 residues: Complement C1s-1 subcomponent (688 aa).

An N-terminal signal peptide occupies residues 1–15 (MWCLVLFSLLASFSA). Residues 16 to 130 (EPTMHGEILS…TGFAAYYTAI (115 aa)) enclose the CUB 1 domain. Ca(2+) contacts are provided by Glu-60, Asp-68, Asp-113, Asp-131, Ile-132, and Glu-134. A disulfide bridge links Cys-65 with Cys-83. The 42-residue stretch at 131–172 (DINECTDFTDVPCSHFCNNFIGGYFCSCPPEYFLHDDMRNCG) folds into the EGF-like; calcium-binding domain. 3 disulfides stabilise this stretch: Cys-135–Cys-147, Cys-143–Cys-156, and Cys-158–Cys-171. Ca(2+)-binding residues include Asn-149, Phe-150, and Gly-153. Residue Asn-149 is modified to (3R)-3-hydroxyasparagine. Asn-174 carries N-linked (GlcNAc...) asparagine glycosylation. A disulfide bond links Cys-175 and Cys-202. Residues 175–290 (CSGDVFTALI…KGWKLRYHGD (116 aa)) form the CUB 2 domain. Ca(2+) contacts are provided by Glu-226, Asp-236, Asp-275, Gly-278, and Gln-279. Cysteines 234 and 251 form a disulfide. 2 Sushi domains span residues 292 to 356 (ISCA…KCQP) and 357 to 423 (VYCG…RCIP). Intrachain disulfides connect Cys-294–Cys-341, Cys-321–Cys-354, Cys-359–Cys-403, Cys-386–Cys-421, Cys-425–Cys-549, Cys-595–Cys-618, and Cys-627–Cys-659. Residues 438-680 (IFGGQPAKIE…YVDWILKTMQ (243 aa)) enclose the Peptidase S1 domain. Active-site charge relay system residues include His-475 and Asp-529. The active-site Charge relay system is the Ser-631. An N-linked (GlcNAc...) asparagine glycan is attached at Asn-641.

It belongs to the peptidase S1 family. Core component of the complement C1 complex, a calcium-dependent complex composed of 1 molecule of the C1Q subcomplex, 2 molecules of C1R and 2 molecules of C1S. The C1Q subcomplex is composed 18 subunits: 3 chains of C1QA, C1QB, and C1QC trimerize to form 6 collagen-like triple helices connected to six globular ligand-recognition modules. Cleaved and activated by C1R to generate Complement C1s subcomponent heavy and light chains. In terms of processing, the iron and 2-oxoglutarate dependent 3-hydroxylation of aspartate and asparagine is (R) stereospecific within EGF domains. Predominantly expressed in liver.

It localises to the secreted. The protein localises to the cell surface. The enzyme catalyses Cleavage of Arg-|-Ala bond in complement component C4 to form C4a and C4b, and Lys(or Arg)-|-Lys bond in complement component C2 to form C2a and C2b: the 'classical' pathway C3 convertase.. Its activity is regulated as follows. Cleaved and activated by C1R. Immunoglobulin-binding promotes autoactivation of C1R, which results in the cleavage of the Arg-Ile bond in the catalytic domain. Inhibited by C1 inhibitor (SERPING1). In terms of biological role, component of the complement C1 complex, a multiprotein complex that initiates the classical pathway of the complement system, a cascade of proteins that leads to phagocytosis and breakdown of pathogens and signaling that strengthens the adaptive immune system. C1S is activated following association of the C1 complex with immunoglobulins (IgG or IgM) complexed with antigens to form antigen-antibody complexes on the surface of pathogens. C1S is cleaved and activated by C1R to generate C1s subcomponent heavy and light chains. C1s subcomponent light chain then cleaves and activates C2 and C4, the next components of the classical complement pathway. Its function is as follows. Serine protease component of the complement C1 complex, which catalyzes cleavage and activation of C2 and C4, the next components of the classical complement pathway. Also cleaves IGFBP5 and thereby inhibits the trophic effects of IGF1. The protein is Complement C1s-1 subcomponent of Mus musculus (Mouse).